The primary structure comprises 334 residues: Holliday junction branch migration complex subunit RuvB (334 aa).

The tract at residues 4-184 (ADRLIQPQLQ…FGIPLRLEFY (181 aa)) is large ATPase domain (RuvB-L). ATP-binding positions include Arg-24, Gly-65, Lys-68, Thr-69, Thr-70, 131-133 (EDY), Arg-174, Tyr-184, and Arg-221. Mg(2+) is bound at residue Thr-69. The small ATPAse domain (RuvB-S) stretch occupies residues 185–255 (NVKDLSTIVS…VAEHALDLLD (71 aa)). Residues 258-334 (GEGFDYMDRK…YLHFGMIKPE (77 aa)) form a head domain (RuvB-H) region. 3 residues coordinate DNA: Arg-294, Arg-313, and Arg-318.

This sequence belongs to the RuvB family. As to quaternary structure, homohexamer. Forms an RuvA(8)-RuvB(12)-Holliday junction (HJ) complex. HJ DNA is sandwiched between 2 RuvA tetramers; dsDNA enters through RuvA and exits via RuvB. An RuvB hexamer assembles on each DNA strand where it exits the tetramer. Each RuvB hexamer is contacted by two RuvA subunits (via domain III) on 2 adjacent RuvB subunits; this complex drives branch migration. In the full resolvosome a probable DNA-RuvA(4)-RuvB(12)-RuvC(2) complex forms which resolves the HJ.

The protein localises to the cytoplasm. It catalyses the reaction ATP + H2O = ADP + phosphate + H(+). In terms of biological role, the RuvA-RuvB-RuvC complex processes Holliday junction (HJ) DNA during genetic recombination and DNA repair, while the RuvA-RuvB complex plays an important role in the rescue of blocked DNA replication forks via replication fork reversal (RFR). RuvA specifically binds to HJ cruciform DNA, conferring on it an open structure. The RuvB hexamer acts as an ATP-dependent pump, pulling dsDNA into and through the RuvAB complex. RuvB forms 2 homohexamers on either side of HJ DNA bound by 1 or 2 RuvA tetramers; 4 subunits per hexamer contact DNA at a time. Coordinated motions by a converter formed by DNA-disengaged RuvB subunits stimulates ATP hydrolysis and nucleotide exchange. Immobilization of the converter enables RuvB to convert the ATP-contained energy into a lever motion, pulling 2 nucleotides of DNA out of the RuvA tetramer per ATP hydrolyzed, thus driving DNA branch migration. The RuvB motors rotate together with the DNA substrate, which together with the progressing nucleotide cycle form the mechanistic basis for DNA recombination by continuous HJ branch migration. Branch migration allows RuvC to scan DNA until it finds its consensus sequence, where it cleaves and resolves cruciform DNA. This is Holliday junction branch migration complex subunit RuvB from Shewanella sp. (strain MR-7).